A 482-amino-acid polypeptide reads, in one-letter code: 23S rRNA (uracil(1939)-C(5))-methyltransferase RlmD (482 aa).

The interval 1–33 (MANLFKQSRAKQKNKTTPSQTQTSTKGSARANA) is disordered. The span at 15–28 (KTTPSQTQTSTKGS) shows a compositional bias: low complexity. Positions 51–108 (TAQDANNNAITIQELDWMGQGVARGATMYFVEGALPGETCDIEVVSSKKKVVSAKTIS) constitute a TRAM domain. Residues C121, C127, C130, and C208 each contribute to the [4Fe-4S] cluster site. Positions 313, 342, 347, 363, 390, and 411 each coordinate S-adenosyl-L-methionine. C437 serves as the catalytic Nucleophile.

It belongs to the class I-like SAM-binding methyltransferase superfamily. RNA M5U methyltransferase family. RlmD subfamily.

The catalysed reaction is uridine(1939) in 23S rRNA + S-adenosyl-L-methionine = 5-methyluridine(1939) in 23S rRNA + S-adenosyl-L-homocysteine + H(+). Its function is as follows. Catalyzes the formation of 5-methyl-uridine at position 1939 (m5U1939) in 23S rRNA. The protein is 23S rRNA (uracil(1939)-C(5))-methyltransferase RlmD of Alteromonas mediterranea (strain DSM 17117 / CIP 110805 / LMG 28347 / Deep ecotype).